The primary structure comprises 93 residues: Small ribosomal subunit protein uS17 (93 aa).

This sequence belongs to the universal ribosomal protein uS17 family. In terms of assembly, part of the 30S ribosomal subunit.

Functionally, one of the primary rRNA binding proteins, it binds specifically to the 5'-end of 16S ribosomal RNA. The chain is Small ribosomal subunit protein uS17 from Bordetella bronchiseptica (strain ATCC BAA-588 / NCTC 13252 / RB50) (Alcaligenes bronchisepticus).